Consider the following 224-residue polypeptide: Orotate phosphoribosyltransferase (224 aa).

Residues Lys26, 73–74 (YK), Arg100, Lys101, Lys104, His106, and 127–135 (EDVTTSGKS) each bind 5-phospho-alpha-D-ribose 1-diphosphate. The orotate site is built by Thr131 and Arg160.

Belongs to the purine/pyrimidine phosphoribosyltransferase family. PyrE subfamily. Homodimer. The cofactor is Mg(2+).

It carries out the reaction orotidine 5'-phosphate + diphosphate = orotate + 5-phospho-alpha-D-ribose 1-diphosphate. It functions in the pathway pyrimidine metabolism; UMP biosynthesis via de novo pathway; UMP from orotate: step 1/2. Functionally, catalyzes the transfer of a ribosyl phosphate group from 5-phosphoribose 1-diphosphate to orotate, leading to the formation of orotidine monophosphate (OMP). The chain is Orotate phosphoribosyltransferase from Clostridium botulinum (strain Alaska E43 / Type E3).